The following is a 540-amino-acid chain: Chaperonin GroEL (540 aa).

ATP is bound by residues 30-33 (TLAP), lysine 51, 87-91 (DGTTT), glycine 415, 479-481 (NAA), and aspartate 495.

The protein belongs to the chaperonin (HSP60) family. In terms of assembly, forms a cylinder of 14 subunits composed of two heptameric rings stacked back-to-back. Interacts with the co-chaperonin GroES.

The protein resides in the cytoplasm. It carries out the reaction ATP + H2O + a folded polypeptide = ADP + phosphate + an unfolded polypeptide.. Its function is as follows. Together with its co-chaperonin GroES, plays an essential role in assisting protein folding. The GroEL-GroES system forms a nano-cage that allows encapsulation of the non-native substrate proteins and provides a physical environment optimized to promote and accelerate protein folding. This Methylovorus sp. (strain SS1 / DSM 11726) protein is Chaperonin GroEL.